Here is a 612-residue protein sequence, read N- to C-terminus: Serine/threonine-protein kinase Nek1 (612 aa).

Residues 4-258 enclose the Protein kinase domain; that stretch reads YEFLEQIGKG…ASDLLRHPHL (255 aa). ATP-binding positions include 10-18 and Lys-33; that span reads IGKGSFGSA. Asp-129 (proton acceptor) is an active-site residue. The span at 503–513 shows a compositional bias: polar residues; sequence ISDGSSSSDQN. A disordered region spans residues 503 to 534; it reads ISDGSSSSDQNATAGASSHTTSSSSRRCRFDP. The span at 514-527 shows a compositional bias: low complexity; the sequence is ATAGASSHTTSSSS.

It belongs to the protein kinase superfamily. NEK Ser/Thr protein kinase family. NIMA subfamily.

It catalyses the reaction L-seryl-[protein] + ATP = O-phospho-L-seryl-[protein] + ADP + H(+). The catalysed reaction is L-threonyl-[protein] + ATP = O-phospho-L-threonyl-[protein] + ADP + H(+). Functionally, may be involved in plant development processes. The sequence is that of Serine/threonine-protein kinase Nek1 (NEK1) from Arabidopsis thaliana (Mouse-ear cress).